The following is a 141-amino-acid chain: ATP synthase epsilon chain (141 aa).

The protein belongs to the ATPase epsilon chain family. F-type ATPases have 2 components, CF(1) - the catalytic core - and CF(0) - the membrane proton channel. CF(1) has five subunits: alpha(3), beta(3), gamma(1), delta(1), epsilon(1). CF(0) has three main subunits: a, b and c.

It localises to the cell membrane. Its function is as follows. Produces ATP from ADP in the presence of a proton gradient across the membrane. This chain is ATP synthase epsilon chain, found in Lactococcus lactis subsp. cremoris (strain SK11).